A 232-amino-acid chain; its full sequence is Ubiquinone biosynthesis O-methyltransferase (232 aa).

Residues Arg36, Gly55, Asp76, and Leu120 each contribute to the S-adenosyl-L-methionine site.

Belongs to the methyltransferase superfamily. UbiG/COQ3 family.

The catalysed reaction is a 3-demethylubiquinol + S-adenosyl-L-methionine = a ubiquinol + S-adenosyl-L-homocysteine + H(+). It carries out the reaction a 3-(all-trans-polyprenyl)benzene-1,2-diol + S-adenosyl-L-methionine = a 2-methoxy-6-(all-trans-polyprenyl)phenol + S-adenosyl-L-homocysteine + H(+). It functions in the pathway cofactor biosynthesis; ubiquinone biosynthesis. In terms of biological role, O-methyltransferase that catalyzes the 2 O-methylation steps in the ubiquinone biosynthetic pathway. The sequence is that of Ubiquinone biosynthesis O-methyltransferase from Pseudomonas paraeruginosa (strain DSM 24068 / PA7) (Pseudomonas aeruginosa (strain PA7)).